The chain runs to 447 residues: Methyl-coenzyme M reductase I subunit beta (447 aa).

Tyr371 provides a ligand contact to coenzyme M. Gly373 lines the coenzyme B pocket.

It belongs to the methyl-coenzyme M reductase beta subunit family. MCR is a hexamer of two alpha, two beta, and two gamma chains, forming a dimer of heterotrimers. Coenzyme F430 is required as a cofactor.

The protein localises to the cytoplasm. The catalysed reaction is coenzyme B + methyl-coenzyme M = methane + coenzyme M-coenzyme B heterodisulfide. The protein operates within one-carbon metabolism; methyl-coenzyme M reduction; methane from methyl-coenzyme M: step 1/1. Component of the methyl-coenzyme M reductase (MCR) I that catalyzes the reductive cleavage of methyl-coenzyme M (CoM-S-CH3 or 2-(methylthio)ethanesulfonate) using coenzyme B (CoB or 7-mercaptoheptanoylthreonine phosphate) as reductant which results in the production of methane and the mixed heterodisulfide of CoB and CoM (CoM-S-S-CoB). This is the final step in methanogenesis. The protein is Methyl-coenzyme M reductase I subunit beta (mcrB) of Methanocaldococcus jannaschii (strain ATCC 43067 / DSM 2661 / JAL-1 / JCM 10045 / NBRC 100440) (Methanococcus jannaschii).